Reading from the N-terminus, the 141-residue chain is Phosphoribosyl-AMP cyclohydrolase (141 aa).

Asp-88 is a binding site for Mg(2+). A Zn(2+)-binding site is contributed by Cys-89. Mg(2+) contacts are provided by Asp-90 and Asp-92. Zn(2+)-binding residues include Cys-109 and Cys-116.

This sequence belongs to the PRA-CH family. As to quaternary structure, homodimer. It depends on Mg(2+) as a cofactor. Zn(2+) serves as cofactor.

The protein resides in the cytoplasm. It carries out the reaction 1-(5-phospho-beta-D-ribosyl)-5'-AMP + H2O = 1-(5-phospho-beta-D-ribosyl)-5-[(5-phospho-beta-D-ribosylamino)methylideneamino]imidazole-4-carboxamide. It functions in the pathway amino-acid biosynthesis; L-histidine biosynthesis; L-histidine from 5-phospho-alpha-D-ribose 1-diphosphate: step 3/9. Catalyzes the hydrolysis of the adenine ring of phosphoribosyl-AMP. In Paracidovorax citrulli (strain AAC00-1) (Acidovorax citrulli), this protein is Phosphoribosyl-AMP cyclohydrolase.